Consider the following 210-residue polypeptide: uncharacterized protein (210 aa).

This is an uncharacterized protein from Aquifex aeolicus (strain VF5).